The following is a 274-amino-acid chain: UPF0758 protein RHECIAT_CH0001935 (274 aa).

Positions 1–57 (MAKRPAATSSNDELPFATEEPVADERSFFGGRPQNPTAPNARAALPASLSGPEHYHG) are disordered. Residues 152 to 274 (VLSSWSSVIQ…HVSLKGLKLI (123 aa)) form the MPN domain. Residues His-223, His-225, and Asp-236 each coordinate Zn(2+). A JAMM motif motif is present at residues 223–236 (HNHPSGDPTPSRAD).

This sequence belongs to the UPF0758 family.

The protein is UPF0758 protein RHECIAT_CH0001935 of Rhizobium etli (strain CIAT 652).